Consider the following 1470-residue polypeptide: MDVTKKSKRDGTEVTERIVTETVTTRLTSLPPKGSTSNGYAKTGSLGGGSRLEKQSLTHGSSGYINSSGSIRGNASTSSYRRTHSPASTLPNSPGSTFERKAHMTRHGTYEGSSSGNSSPEYPRKELASSSTRGRSQTRESEIRVRLQSASPSTRWTELDEVKRLLKGSRSASASPTRNTSNTLPIPKKGTVETKTVTASSHSVSGTYDSAILDTNFPPHMWSSTLPAGSSLGTYQNNITAQSTSLLNTNAYSTGSVFGVPNNMASCSPTLHPGLSSCSSVFGMQNNLAPSSSVLSHGTTTASTAYGAKKNVPQPPTVTSTGVSTSATCTTSVQSDDLLHKDCKFLILEKDNTPAKKEMELLIMTKDSGKVFTASPATISSTSFSEDTLKKEKQAAYAADTCLKADVNGDLNTVSTKSKMTSAENHGYDRGGGGGRGKGGGAGGGGGGGGASGGGGAWGAAPAWCPCGSCCSWWKWLLGLLLTWLLLLGLLFGLIALAEEVRKLKARVEELEKTKVLYHDVQMDKSNRDRLQAEAPSLGPGLGKAELDGYSQEAIWLFVRNKLMTEQENGNLRGSPGPKGDMGSQGPKGDRGLPGTPGIPGPLGHPGPEGPKGQKGSIGDPGMEGPIGQRGLAGPMGPRGEPGPPGSGEKGDRGIAGEQGPQGLPGVPGPPGLRGHSGSPGPQGPPGAVGPQGLRGDVGLPGVKGDKGLMGPPGPKGDQGEKGPRGLTGEPGIRGLPGAVGEPGAKGAMGPAGADGQQGSRGEQGLTGMPGTRGPPGPAGDPGKPGLTGPQGPQGLPGSPGRPGTKGEPGAPGRVMTSEGSSTITVPGPPGPPGAMGPPGPPGTPGPAGPAGLPGQQGPRGEPGLAGDSFLSSGSSISEVLSAQGVDLRGPPGPPGPRGPPGPSIPGPPGPRGPPGEGVPGPPGPPGSFLTDSETFFTGPPGPPGPPGPKGDQGDPGVPGTPGISGGLSHGASSSTLYMQGPPGPPGPPGPPGSLSSSGQDIQHYIAEYMQSDNIRTYLSGVQGPPGPPGPPGPVITITGETFDYSQLASQVVSYLRSSGYGAGLSSASSSEDILAMLRRNDVWQYLRQNLVGPPGPPGPPGVSGDGSLLSLDYGELSRHILNYMSSSGISFGHPGPPGPPGLPGTSYEELLTMLRGSDYRNIIGPPGPPGPPGMPGNAWSSISVEDLSSYLHTAGLSSIPGPPGPPGPPGPRGPPGVSAALSTYAAENSDNFRSELISYLTSPDVRSFIVGPPGPPGPQGPPGDGHLRENYNWSSNSSARRGTSYSSSTGTGGTNGGSLGEGGAYGAGDGGPYGTDIGPGGGYGAAAGGGIYGTNGDSFRDGFTGDLDYNKLAVRVSESMQRQGLLQGMAYTVQGPPGPQGPPGISRVFSAYSNVTQDLMDFFQTYGTIPGPPGQKGDVGTPGPKGDRGPAGPRGPPGPPGPRGNKGEKGDKGDQVYTGRRKRSIAIKP.

Disordered regions lie at residues 1–155 (MDVT…PSTR), 167–193 (KGSRSASASPTRNTSNTLPIPKKGTVE), and 422–452 (SAENHGYDRGGGGGRGKGGGAGGGGGGGGAS). Residues 1-476 (MDVTKKSKRD…CGSCCSWWKW (476 aa)) lie on the Cytoplasmic side of the membrane. A nonhelical region (NC16) region spans residues 1 to 573 (MDVTKKSKRD…MTEQENGNLR (573 aa)). Residues 9–19 (RDGTEVTERIV) are compositionally biased toward basic and acidic residues. The span at 60–74 (GSSGYINSSGSIRGN) shows a compositional bias: low complexity. Polar residues-rich tracts occupy residues 75–96 (ASTSSYRRTHSPASTLPNSPGS), 111–120 (EGSSSGNSSP), and 170–184 (RSASASPTRNTSNTL). The interval 146–231 (RLQSASPSTR…WSSTLPAGSS (86 aa)) is necessary for interaction with DST and for the recruitment of DST to hemidesmosome. Residues 430-452 (RGGGGGRGKGGGAGGGGGGGGAS) show a composition bias toward gly residues. A helical; Signal-anchor for type II membrane protein transmembrane segment spans residues 477-497 (LLGLLLTWLLLLGLLFGLIAL). Residues 498–1470 (AEEVRKLKAR…RRKRSIAIKP (973 aa)) are Extracellular-facing. The residue at position 551 (Ser551) is a Phosphoserine; by CK2. 5 disordered regions span residues 568-873 (ENGN…FLSS), 885-999 (GVDL…SSSG), 1159-1181 (DYRNIIGPPGPPGPPGMPGNAWS), 1194-1220 (TAGLSSIPGPPGPPGPPGPRGPPGVSA), and 1249-1298 (FIVG…TNGG). A triple-helical region region spans residues 574-1456 (GSPGPKGDMG…KGEKGDKGDQ (883 aa)). Over residues 597-609 (PGIPGPLGHPGPE) the composition is skewed to pro residues. Low complexity-rich tracts occupy residues 742–755 (EPGAKGAMGPAGAD) and 781–803 (DPGKPGLTGPQGPQGLPGSPGRP). Residues 827–848 (PGPPGPPGAMGPPGPPGTPGPA) are compositionally biased toward pro residues. The segment covering 850–873 (PAGLPGQQGPRGEPGLAGDSFLSS) has biased composition (low complexity). 6 stretches are compositionally biased toward pro residues: residues 891–914 (PPGPPGPRGPPGPSIPGPPGPRGP), 940–949 (PPGPPGPPGP), 982–992 (PPGPPGPPGPP), 1166–1175 (PPGPPGPPGM), 1201–1215 (PGPPGPPGPPGPRGP), and 1253–1262 (PPGPPGPQGP). Asn1273 carries N-linked (GlcNAc...) asparagine glycosylation. The segment covering 1275–1290 (SSNSSARRGTSYSSST) has biased composition (low complexity). Residue Asn1395 is glycosylated (N-linked (GlcNAc...) asparagine). Positions 1406–1470 (TYGTIPGPPG…RRKRSIAIKP (65 aa)) are disordered. Pro residues predominate over residues 1434-1443 (PRGPPGPPGP). Positions 1446–1455 (NKGEKGDKGD) are enriched in basic and acidic residues. The segment at 1457–1470 (VYTGRRKRSIAIKP) is nonhelical region (NC1). Basic residues predominate over residues 1460-1470 (GRRKRSIAIKP).

In terms of assembly, homotrimers of alpha 1(XVII)chains. Interacts (via cytoplasmic region) with ITGB4 (via cytoplasmic region). Interacts (via cytoplasmic region) with DST (via N-terminus). Interacts (via N-terminus) with PLEC. Interacts (via cytoplasmic region) with DSP. Post-translationally, the intracellular/endo domain is disulfide-linked. Prolines at the third position of the tripeptide repeating unit (G-X-Y) are hydroxylated in some or all of the chains. In terms of processing, the ectodomain is shedded from the surface of keratinocytes resulting in a 120-kDa soluble form, also named as 120 kDa linear IgA disease antigen homolog. The shedding is mediated by membrane-bound metalloproteases. This cleavage is inhibited by phosphorylation at Ser-551.

The protein localises to the cell junction. It is found in the hemidesmosome. The protein resides in the membrane. Its subcellular location is the secreted. It localises to the extracellular space. The protein localises to the extracellular matrix. It is found in the basement membrane. Functionally, may play a role in the integrity of hemidesmosome and the attachment of basal keratinocytes to the underlying basement membrane. Its function is as follows. The 120 kDa linear IgA disease antigen homolog is an anchoring filament component involved in dermal-epidermal cohesion. This is Collagen alpha-1(XVII) chain (Col17a1) from Mus musculus (Mouse).